The chain runs to 421 residues: Mannose-1-phosphate guanylyltransferase regulatory subunit alpha (421 aa).

Residues 2-252 (LKAVILIGGP…EGCWSQIKSA (251 aa)) are substrate-binding domain. The GDP-alpha-D-mannose site is built by E85 and Q248. Positions 274–421 (LASTKEGGPT…SRSFKNQIIL (148 aa)) are hexapeptide repeat domain. Positions 357-385 (TPSDPNPNDPYSKIDSETLFREGKLTPSI) are C-loop.

It belongs to the transferase hexapeptide repeat family. In terms of assembly, component of the GMPPA-GMPPB mannose-1-phosphate guanylyltransferase complex composed of 4 gmppa subunits and 8 gmppb subunits; the complex is organized into three layers, a central layer made up of 2 gmppa dimers sandwiched between two layers each made up of 2 gmppb dimers.

It is found in the cytoplasm. Regulatory subunit of the GMPPA-GMPPB mannose-1-phosphate guanylyltransferase complex; reduces the catalytic activity of GMPPB when part of the complex. Mediates allosteric feedback inhibition of GMPPB catalytic activity upon binding GDP-alpha-D-mannose. Together with GMPPB regulates GDP-alpha-D-mannose levels. The chain is Mannose-1-phosphate guanylyltransferase regulatory subunit alpha (gmppa) from Xenopus tropicalis (Western clawed frog).